A 222-amino-acid polypeptide reads, in one-letter code: 7-carboxy-7-deazaguanine synthase (222 aa).

Residues 16 to 18 (LQG) and Arg-31 each bind substrate. The region spanning 22–222 (NLGRPAVFVR…IMAWGNARGK (201 aa)) is the Radical SAM core domain. Positions 35, 39, and 42 each coordinate [4Fe-4S] cluster. Residue Thr-44 coordinates Mg(2+). Position 77 (Thr-77) interacts with substrate. S-adenosyl-L-methionine-binding positions include Gly-79 and 126-128 (SPK).

This sequence belongs to the radical SAM superfamily. 7-carboxy-7-deazaguanine synthase family. Homodimer. It depends on [4Fe-4S] cluster as a cofactor. The cofactor is S-adenosyl-L-methionine. Mg(2+) serves as cofactor.

It carries out the reaction 6-carboxy-5,6,7,8-tetrahydropterin + H(+) = 7-carboxy-7-deazaguanine + NH4(+). It functions in the pathway purine metabolism; 7-cyano-7-deazaguanine biosynthesis. Its function is as follows. Catalyzes the complex heterocyclic radical-mediated conversion of 6-carboxy-5,6,7,8-tetrahydropterin (CPH4) to 7-carboxy-7-deazaguanine (CDG), a step common to the biosynthetic pathways of all 7-deazapurine-containing compounds. This chain is 7-carboxy-7-deazaguanine synthase, found in Pyrobaculum aerophilum (strain ATCC 51768 / DSM 7523 / JCM 9630 / CIP 104966 / NBRC 100827 / IM2).